Reading from the N-terminus, the 297-residue chain is ATP phosphoribosyltransferase (297 aa).

N-acetylmethionine is present on Met-1.

It belongs to the ATP phosphoribosyltransferase family.

Its subcellular location is the cytoplasm. It carries out the reaction 1-(5-phospho-beta-D-ribosyl)-ATP + diphosphate = 5-phospho-alpha-D-ribose 1-diphosphate + ATP. It participates in amino-acid biosynthesis; L-histidine biosynthesis; L-histidine from 5-phospho-alpha-D-ribose 1-diphosphate: step 1/9. Catalyzes the condensation of ATP and 5-phosphoribose 1-diphosphate to form N'-(5'-phosphoribosyl)-ATP (PR-ATP). Has a crucial role in the pathway because the rate of histidine biosynthesis seems to be controlled primarily by regulation of the enzymatic activity. In Saccharomyces cerevisiae (strain ATCC 204508 / S288c) (Baker's yeast), this protein is ATP phosphoribosyltransferase (HIS1).